We begin with the raw amino-acid sequence, 1725 residues long: Latrophilin Cirl (1725 aa).

The Extracellular segment spans residues 1–757 (MALNELGNCA…LFTMFDGNMR (757 aa)). Residues 18-107 (ACEGKQLTIE…KYLEAHYQCI (90 aa)) form the SUEL-type lectin domain. N-linked (GlcNAc...) asparagine glycosylation is present at Asn135. Positions 164 to 284 (AVQPTHSTPS…SAANNSVNIG (121 aa)) are disordered. Low complexity-rich tracts occupy residues 167 to 176 (PTHSTPSSST) and 224 to 236 (SSSSSSNSGSAGN). Residues Asn236, Asn278, Asn326, Asn388, Asn645, Asn693, and Asn720 are each glycosylated (N-linked (GlcNAc...) asparagine). The segment covering 259–282 (LLTTKSSPNRTPGTTASAANNSVN) has biased composition (polar residues). Residues 361 to 390 (DDEYDDDLPAASSTTPQPSNNGGDCVHNSS) are disordered. Over residues 371–390 (ASSTTPQPSNNGGDCVHNSS) the composition is skewed to polar residues. The region spanning 551 to 744 (RNVVQKVKNI…AILMDVVDEH (194 aa)) is the GAIN-B domain. Intrachain disulfides connect Cys699–Cys726 and Cys714–Cys728. Residues 699–744 (CVFWNYIDHAWSANGCSLESTNRTHSVCSCNHLTNFAILMDVVDEH) are GPS. The helical transmembrane segment at 758-778 (IFIYISVAICVVFIIIALLTL) threads the bilayer. The Cytoplasmic segment spans residues 779–791 (KLFNGVFVKSART). A helical transmembrane segment spans residues 792 to 812 (SIYSSIYICLLAIELLFLLGI). The Extracellular segment spans residues 813 to 818 (EQTETS). The chain crosses the membrane as a helical span at residues 819 to 839 (IFCGFITVFLHCAILSGTAWF). Residues 840 to 865 (CYEAFHSYSTLTSDELLLEVDQTPKV) are Cytoplasmic-facing. Residues 866-886 (NCYYLLSYGLSLSVVAISLVI) traverse the membrane as a helical segment. At 887-910 (DPSTYTQNDYCVLMEANALFYSTF) the chain is on the extracellular side. The chain crosses the membrane as a helical span at residues 911-931 (VAPVLIFFVAAITYTFLSWII). The Cytoplasmic portion of the chain corresponds to 932–958 (MRRKSRTALKTKEHTRLANVRFDIRCS). The chain crosses the membrane as a helical span at residues 959-979 (FVFLLLLSVVWCCAYFYLRGA). The Extracellular portion of the chain corresponds to 980 to 986 (KLDEDGA). A helical membrane pass occupies residues 987-1007 (PIYGYCFICFNTLLGIYIFVF). Residues 1008–1725 (HCIQNEKIRR…VRCYLEPLAK (718 aa)) lie on the Cytoplasmic side of the membrane. Residues 1056-1088 (TANQSAGTLSKSKSKLPLGAGDEARDGDAQQQQ) are disordered. Position 1153 is a phosphoserine (Ser1153). Disordered stretches follow at residues 1236-1263 (HNNQHGKKKRGGGAGAVPASPSGSLHSR), 1309-1337 (QQLQQQQLRQQRQQQQQQLSSDEEQAEQH), 1472-1555 (GGGS…SDER), and 1636-1705 (LFGH…QARH). Residues 1237–1246 (NNQHGKKKRG) are compositionally biased toward basic residues. A phosphoserine mark is found at Ser1255 and Ser1262. Over residues 1309 to 1327 (QQLQQQQLRQQRQQQQQQL) the composition is skewed to low complexity. 2 positions are modified to phosphoserine: Ser1328 and Ser1329. Over residues 1478 to 1496 (GGSVTSRSQQQQQQQLKQK) the composition is skewed to low complexity. Composition is skewed to acidic residues over residues 1505–1522 (DDDDDDDDDDDEYDDEVT) and 1532–1543 (CDDEDNESDIDD). The span at 1651-1666 (QTPAQKRQQLQKLSPQ) shows a compositional bias: polar residues. A compositionally biased stretch (low complexity) spans 1667–1683 (STTSSSSHTSHSNPQHA). The span at 1684 to 1693 (PAHHLQHHHT) shows a compositional bias: basic residues. Positions 1694-1705 (QQQQQQQQQARH) are enriched in low complexity.

It belongs to the G-protein coupled receptor 2 family. LN-TM7 subfamily. As to quaternary structure, forms a heterodimer, consisting of a large extracellular region non-covalently linked to a seven-transmembrane moiety. In terms of processing, proteolytically cleaved into 2 subunits, an extracellular subunit and a seven-transmembrane subunit.

It is found in the cell membrane. The protein is Latrophilin Cirl of Drosophila mojavensis (Fruit fly).